A 410-amino-acid chain; its full sequence is F-box protein At3g61340 (410 aa).

Positions 17–66 (EEKSERIPFDLVIEILLRLPVKSIARFRYVSKLWQSTLRGQHFTESYLTI) constitute an F-box domain.

The sequence is that of F-box protein At3g61340 from Arabidopsis thaliana (Mouse-ear cress).